Reading from the N-terminus, the 148-residue chain is UPF0756 membrane protein YeaL (148 aa).

The next 4 helical transmembrane spans lie at 14–34 (ALGF…LIIV), 51–71 (LSIG…SGTL), 86–106 (LVAI…VTLM), and 121–141 (VLGV…AGLV).

It belongs to the UPF0756 family.

The protein localises to the cell membrane. This Shigella flexneri protein is UPF0756 membrane protein YeaL.